Consider the following 141-residue polypeptide: Putative pre-16S rRNA nuclease (141 aa).

Belongs to the YqgF nuclease family.

It localises to the cytoplasm. Functionally, could be a nuclease involved in processing of the 5'-end of pre-16S rRNA. The protein is Putative pre-16S rRNA nuclease of Aliivibrio salmonicida (strain LFI1238) (Vibrio salmonicida (strain LFI1238)).